We begin with the raw amino-acid sequence, 402 residues long: 1-deoxy-D-xylulose 5-phosphate reductoisomerase (402 aa).

NADPH-binding residues include Thr-10, Gly-11, Ser-12, Ile-13, Gly-36, Asn-38, and Asn-124. Lys-125 contributes to the 1-deoxy-D-xylulose 5-phosphate binding site. Glu-126 contributes to the NADPH binding site. Asp-150 provides a ligand contact to Mn(2+). The 1-deoxy-D-xylulose 5-phosphate site is built by Ser-151, Glu-152, Ser-186, and His-209. A Mn(2+)-binding site is contributed by Glu-152. Residue Gly-215 participates in NADPH binding. 1-deoxy-D-xylulose 5-phosphate-binding residues include Ser-222, Asn-227, Lys-228, and Glu-231. Glu-231 lines the Mn(2+) pocket.

This sequence belongs to the DXR family. The cofactor is Mg(2+). It depends on Mn(2+) as a cofactor.

The catalysed reaction is 2-C-methyl-D-erythritol 4-phosphate + NADP(+) = 1-deoxy-D-xylulose 5-phosphate + NADPH + H(+). It participates in isoprenoid biosynthesis; isopentenyl diphosphate biosynthesis via DXP pathway; isopentenyl diphosphate from 1-deoxy-D-xylulose 5-phosphate: step 1/6. Functionally, catalyzes the NADPH-dependent rearrangement and reduction of 1-deoxy-D-xylulose-5-phosphate (DXP) to 2-C-methyl-D-erythritol 4-phosphate (MEP). The protein is 1-deoxy-D-xylulose 5-phosphate reductoisomerase of Vibrio cholerae serotype O1 (strain ATCC 39541 / Classical Ogawa 395 / O395).